Here is a 133-residue protein sequence, read N- to C-terminus: ATP synthase epsilon chain, chloroplastic (133 aa).

Belongs to the ATPase epsilon chain family. F-type ATPases have 2 components, CF(1) - the catalytic core - and CF(0) - the membrane proton channel. CF(1) has five subunits: alpha(3), beta(3), gamma(1), delta(1), epsilon(1). CF(0) has three main subunits: a, b and c.

Its subcellular location is the plastid. The protein resides in the chloroplast thylakoid membrane. Its function is as follows. Produces ATP from ADP in the presence of a proton gradient across the membrane. In Zygnema circumcarinatum (Green alga), this protein is ATP synthase epsilon chain, chloroplastic.